A 264-amino-acid chain; its full sequence is 3-methyl-2-oxobutanoate hydroxymethyltransferase (264 aa).

D45 and D84 together coordinate Mg(2+). 3-methyl-2-oxobutanoate-binding positions include 45 to 46 (DS), D84, and K112. E114 serves as a coordination point for Mg(2+). E181 acts as the Proton acceptor in catalysis.

The protein belongs to the PanB family. Homodecamer; pentamer of dimers. Mg(2+) is required as a cofactor.

The protein resides in the cytoplasm. It catalyses the reaction 3-methyl-2-oxobutanoate + (6R)-5,10-methylene-5,6,7,8-tetrahydrofolate + H2O = 2-dehydropantoate + (6S)-5,6,7,8-tetrahydrofolate. It participates in cofactor biosynthesis; (R)-pantothenate biosynthesis; (R)-pantoate from 3-methyl-2-oxobutanoate: step 1/2. Its function is as follows. Catalyzes the reversible reaction in which hydroxymethyl group from 5,10-methylenetetrahydrofolate is transferred onto alpha-ketoisovalerate to form ketopantoate. The protein is 3-methyl-2-oxobutanoate hydroxymethyltransferase of Colwellia psychrerythraea (strain 34H / ATCC BAA-681) (Vibrio psychroerythus).